We begin with the raw amino-acid sequence, 339 residues long: D-erythrose-4-phosphate dehydrogenase (339 aa).

NAD(+) is bound at residue 12 to 13 (RI). Residues 154–156 (SCT), arginine 200, 213–214 (TK), and arginine 236 each bind substrate. The active-site Nucleophile is cysteine 155. Asparagine 318 serves as a coordination point for NAD(+).

Belongs to the glyceraldehyde-3-phosphate dehydrogenase family. Epd subfamily. In terms of assembly, homotetramer.

The protein resides in the cytoplasm. The catalysed reaction is D-erythrose 4-phosphate + NAD(+) + H2O = 4-phospho-D-erythronate + NADH + 2 H(+). The protein operates within cofactor biosynthesis; pyridoxine 5'-phosphate biosynthesis; pyridoxine 5'-phosphate from D-erythrose 4-phosphate: step 1/5. Functionally, catalyzes the NAD-dependent conversion of D-erythrose 4-phosphate to 4-phosphoerythronate. The sequence is that of D-erythrose-4-phosphate dehydrogenase from Enterobacter sp. (strain 638).